Here is a 631-residue protein sequence, read N- to C-terminus: Phosphomethylpyrimidine synthase (631 aa).

Residues Asn239, Met268, Tyr297, His333, Ser353–Gly355, Asp394–Arg397, and Glu433 each bind substrate. His437 serves as a coordination point for Zn(2+). A substrate-binding site is contributed by Tyr460. His501 lines the Zn(2+) pocket. [4Fe-4S] cluster is bound by residues Cys581, Cys584, and Cys589.

The protein belongs to the ThiC family. As to quaternary structure, homodimer. [4Fe-4S] cluster serves as cofactor.

It catalyses the reaction 5-amino-1-(5-phospho-beta-D-ribosyl)imidazole + S-adenosyl-L-methionine = 4-amino-2-methyl-5-(phosphooxymethyl)pyrimidine + CO + 5'-deoxyadenosine + formate + L-methionine + 3 H(+). Its pathway is cofactor biosynthesis; thiamine diphosphate biosynthesis. In terms of biological role, catalyzes the synthesis of the hydroxymethylpyrimidine phosphate (HMP-P) moiety of thiamine from aminoimidazole ribotide (AIR) in a radical S-adenosyl-L-methionine (SAM)-dependent reaction. The protein is Phosphomethylpyrimidine synthase of Salmonella paratyphi B (strain ATCC BAA-1250 / SPB7).